Reading from the N-terminus, the 349-residue chain is UPF0324 inner membrane protein YeiH (349 aa).

The Periplasmic segment spans residues 1–12; sequence MTNITLQKQHRT. A helical transmembrane segment spans residues 13 to 32; the sequence is LWHFIPGLALSAVITGVALW. Topologically, residues 33–35 are cytoplasmic; it reads GGS. A helical transmembrane segment spans residues 36–58; sequence IPAVAGAGFSALTLAILLGMVLG. Topologically, residues 59–99 are periplasmic; sequence NTIYPHIWKSCDGGVLFAKQYLLRLGIILYGFRLTFSQIAD. The helical transmembrane segment at 100–122 threads the bilayer; the sequence is VGISGIIIDVLTLSSTFLLACFL. At 123–131 the chain is on the cytoplasmic side; that stretch reads GQKVFGLDK. Residues 132 to 151 form a helical membrane-spanning segment; the sequence is HTSWLIGAGSSICGAAAVLA. Residues 152 to 162 are Periplasmic-facing; sequence TEPVVKAEASK. A helical membrane pass occupies residues 163–185; that stretch reads VTVAVATVVIFGTVAIFLYPAIY. Topologically, residues 186 to 261 are cytoplasmic; that stretch reads PLMSQWFSPE…SGANSGEKSK (76 aa). Residues 262-283 traverse the membrane as a helical segment; the sequence is ITIPWFAILFIVVAIFNSFHLL. At 284-289 the chain is on the periplasmic side; it reads PQSVVN. Residues 290–312 form a helical membrane-spanning segment; that stretch reads MLVTLDTFLLAMAMAALGLTTHV. The Cytoplasmic segment spans residues 313–321; sequence SALKKAGAK. The chain crosses the membrane as a helical span at residues 322 to 344; that stretch reads PLLMALVLFAWLIVGGGAINYVI. Over 345 to 349 the chain is Periplasmic; the sequence is QSVIA.

This sequence belongs to the UPF0324 family.

It is found in the cell inner membrane. The polypeptide is UPF0324 inner membrane protein YeiH (yeiH) (Escherichia coli O157:H7).